A 450-amino-acid polypeptide reads, in one-letter code: ATP-dependent protease ATPase subunit HslU (450 aa).

Residues Val-29, 71–76, Asp-261, Glu-328, and Arg-400 contribute to the ATP site; that span reads GVGKTE.

This sequence belongs to the ClpX chaperone family. HslU subfamily. In terms of assembly, a double ring-shaped homohexamer of HslV is capped on each side by a ring-shaped HslU homohexamer. The assembly of the HslU/HslV complex is dependent on binding of ATP.

It localises to the cytoplasm. Functionally, ATPase subunit of a proteasome-like degradation complex; this subunit has chaperone activity. The binding of ATP and its subsequent hydrolysis by HslU are essential for unfolding of protein substrates subsequently hydrolyzed by HslV. HslU recognizes the N-terminal part of its protein substrates and unfolds these before they are guided to HslV for hydrolysis. This chain is ATP-dependent protease ATPase subunit HslU, found in Rickettsia akari (strain Hartford).